The following is an 801-amino-acid chain: Phenylalanine--tRNA ligase beta subunit (801 aa).

In terms of domain architecture, tRNA-binding spans 39 to 153 (AEGLSKLVVG…EEAVPGDAIF (115 aa)). The B5 domain maps to 406 to 481 (TEPVEVSTSL…RIYGYDKLPT (76 aa)). Residues Asp459, Asp465, Glu468, and Glu469 each coordinate Mg(2+). The FDX-ACB domain occupies 708-801 (TKFPAMTRDI…LTEQVGAEVR (94 aa)).

This sequence belongs to the phenylalanyl-tRNA synthetase beta subunit family. Type 1 subfamily. As to quaternary structure, tetramer of two alpha and two beta subunits. Mg(2+) serves as cofactor.

It is found in the cytoplasm. The enzyme catalyses tRNA(Phe) + L-phenylalanine + ATP = L-phenylalanyl-tRNA(Phe) + AMP + diphosphate + H(+). The chain is Phenylalanine--tRNA ligase beta subunit from Streptococcus pyogenes serotype M18 (strain MGAS8232).